Consider the following 23-residue polypeptide: Potassium channel toxin alpha-KTx 13.4 (23 aa).

3 disulfides stabilise this stretch: Cys2/Cys15, Cys5/Cys20, and Cys9/Cys22. The interaction with Ca(2+)-activated K(+) channels stretch occupies residues 13–20 (GKCINGKC). A Tyrosine amide modification is found at Tyr23.

As to expression, expressed by the venom gland.

The protein localises to the secreted. Functionally, blocks the potassium channel Shaker B. This Tityus stigmurus (Brazilian scorpion) protein is Potassium channel toxin alpha-KTx 13.4.